The sequence spans 323 residues: Probable cell division protein WhiA (323 aa).

Positions 279 to 313 (TLKELGEMVSGGKISKSGINHRLRKLDEIAERLRA) form a DNA-binding region, H-T-H motif.

The protein belongs to the WhiA family.

In terms of biological role, involved in cell division and chromosome segregation. This chain is Probable cell division protein WhiA, found in Anoxybacillus flavithermus (strain DSM 21510 / WK1).